We begin with the raw amino-acid sequence, 321 residues long: Peptide transport system permease protein SapB (321 aa).

Residues 1 to 8 lie on the Cytoplasmic side of the membrane; the sequence is MIIFTLRR. Residues 9 to 29 traverse the membrane as a helical segment; that stretch reads LLLLLVTLFFLTFIGFSLSYF. Residues 30-80 are Periplasmic-facing; it reads TPHAPLQGASLWNAWVFWFNGLLHWDFGVSSINGQLISEQLKEVFPATMEL. The ABC transmembrane type-1 domain maps to 74-302; that stretch reads FPATMELCIL…SLVIVVNVIS (229 aa). The chain crosses the membrane as a helical span at residues 81 to 101; it reads CILAFGFALMVGIPVGMLAGV. Topologically, residues 102–113 are cytoplasmic; it reads TRSKWPDRFISA. Residues 114 to 134 form a helical membrane-spanning segment; that stretch reads LALLGFSIPVFWLALLLTLFF. The Periplasmic segment spans residues 135–174; sequence SLTLGWLPVSGRFDLLYEVKPVTGFAIIDAWISDSPWRDE. Residues 175–195 form a helical membrane-spanning segment; that stretch reads MVMSAIRHMVLPVLTLSVAPT. The Cytoplasmic portion of the chain corresponds to 196–248; that stretch reads TEVIRLMRISTIEVYDQNYVKAAATRGLSRFTILRRHVLHNALPPVIPRLGLQ. A helical transmembrane segment spans residues 249 to 269; it reads FSTMLTLAMITEMVFSWPGLG. Topologically, residues 270-280 are periplasmic; the sequence is RWLIHAIRQQD. The helical transmembrane segment at 281 to 301 threads the bilayer; that stretch reads YAAISAGVMVIGSLVIVVNVI. Over 302 to 321 the chain is Cytoplasmic; it reads SDILGAMANPLKHKEWYALR.

This sequence belongs to the binding-protein-dependent transport system permease family. OppBC subfamily.

It is found in the cell inner membrane. In terms of biological role, involved in a peptide intake transport system that plays a role in the resistance to antimicrobial peptides. This chain is Peptide transport system permease protein SapB, found in Salmonella typhimurium (strain LT2 / SGSC1412 / ATCC 700720).